The following is a 184-amino-acid chain: Outer-membrane lipoprotein carrier protein (184 aa).

A signal peptide spans 1–19 (MKAFLKILMVLIFVSVAYA).

The protein belongs to the LolA family. As to quaternary structure, monomer.

The protein resides in the periplasm. Functionally, participates in the translocation of lipoproteins from the inner membrane to the outer membrane. Only forms a complex with a lipoprotein if the residue after the N-terminal Cys is not an aspartate (The Asp acts as a targeting signal to indicate that the lipoprotein should stay in the inner membrane). The protein is Outer-membrane lipoprotein carrier protein of Helicobacter pylori (strain P12).